We begin with the raw amino-acid sequence, 437 residues long: MTHYHFVGIKGSGMSSLAQIMHDLGHEVQGSDIENYVFTEVALRNKGIKILPFDANNIKEDMVVIQGNAFASSHEEIVRAHQLKLDVVSYNDFLGQIIDQYTSVAVTGAHGKTSTTGLLSHVMNGDKKTSFLIGDGTGMGLPESDYFAFEACEYRRHFLSYKPDYAIMTNIDFDHPDYFKDINDVFDAFQEMAHNVKKGIIAWGDDEHLRKIEADVPIYYYGFKDSDDIYAQNIQITDKGTAFDVYVDGEFYDHFLSPQYGDHTVLNALAVIAISYLEKLDVTNIKEALETFGGVKRRFNETTIANQVIVDDYAHHPREISATIETARKKYPHKEVVAVFQPHTFSRTQAFLNEFAESLSKADRVFLCEIFGSIRENTGALTIQDLIDKIEGASLINEDSINVLEQFDNAVVLFMGAGDIQKLQNAYLDKLGMKNAF.

Position 108-114 (108-114) interacts with ATP; it reads GAHGKTS.

This sequence belongs to the MurCDEF family.

The protein resides in the cytoplasm. It catalyses the reaction UDP-N-acetyl-alpha-D-muramate + L-alanine + ATP = UDP-N-acetyl-alpha-D-muramoyl-L-alanine + ADP + phosphate + H(+). Its pathway is cell wall biogenesis; peptidoglycan biosynthesis. Cell wall formation. The sequence is that of UDP-N-acetylmuramate--L-alanine ligase from Staphylococcus aureus (strain JH9).